We begin with the raw amino-acid sequence, 250 residues long: Flavin-dependent thymidylate synthase (250 aa).

Residues 7–233 form the ThyX domain; sequence LRVQLIAKTE…PAVFADFEVT (227 aa). DUMP is bound by residues 92–95, 103–107, and Arg172; these read ELIR and QLSQR. Residues 95–97 and Gln103 each bind FAD; that span reads RHR. Positions 95 to 105 match the ThyX motif motif; it reads RHRHFSYSQLS. Residues 188–190 and His194 contribute to the FAD site; that span reads NYR. Arg199 is a binding site for dUMP. The active-site Involved in ionization of N3 of dUMP, leading to its activation is Arg199.

This sequence belongs to the thymidylate synthase ThyX family. As to quaternary structure, homotetramer. It depends on FAD as a cofactor.

The enzyme catalyses dUMP + (6R)-5,10-methylene-5,6,7,8-tetrahydrofolate + NADPH + H(+) = dTMP + (6S)-5,6,7,8-tetrahydrofolate + NADP(+). It participates in pyrimidine metabolism; dTTP biosynthesis. Its function is as follows. Catalyzes the reductive methylation of 2'-deoxyuridine-5'-monophosphate (dUMP) to 2'-deoxythymidine-5'-monophosphate (dTMP) while utilizing 5,10-methylenetetrahydrofolate (mTHF) as the methyl donor, and NADPH and FADH(2) as the reductant. The protein is Flavin-dependent thymidylate synthase of Mycobacterium marinum (strain ATCC BAA-535 / M).